Consider the following 113-residue polypeptide: Iron-sulfur cluster insertion protein ErpA (113 aa).

Residues cysteine 41, cysteine 105, and cysteine 107 each contribute to the iron-sulfur cluster site.

It belongs to the HesB/IscA family. In terms of assembly, homodimer. Iron-sulfur cluster is required as a cofactor.

Required for insertion of 4Fe-4S clusters for at least IspG. This chain is Iron-sulfur cluster insertion protein ErpA, found in Actinobacillus pleuropneumoniae serotype 5b (strain L20).